Consider the following 784-residue polypeptide: ent-copalyl diphosphate synthase 2, chloroplastic (784 aa).

The N-terminal 57 residues, 1 to 57, are a transit peptide targeting the chloroplast; the sequence is MSMTLFASVTRPGLPGPTALRFPETRHLFHSVTAFAASFSPSKSSVGSSQCNATTPP. Residue Lys242 coordinates substrate. Residues Asp379 and Asp381 each contribute to the Mg(2+) site. The DXDD motif motif lies at 379-382; that stretch reads DIDD. Lys466 lines the substrate pocket.

Belongs to the terpene synthase family. The cofactor is Mg(2+). Present in both leaves and flowers.

It is found in the plastid. It localises to the chloroplast. It functions in the pathway plant hormone biosynthesis; gibberellin biosynthesis. The protein operates within secondary metabolite biosynthesis; terpenoid biosynthesis. Its function is as follows. Involved in the biosynthesis of labdane-type diterpenoid including marrubiin and other labdane-related furanoid diterpenoids with potential applications as anti-diabetics, analgesics or vasorelaxants. May be involved in the conversion of geranylgeranyl diphosphate (GGPP) to ent-copalyl diphosphate (ent-CPP) and 8-hydroxycopalyl diphosphate (LPP, labda-13-en-8-ol diphosphate). In Marrubium vulgare (White horehound), this protein is ent-copalyl diphosphate synthase 2, chloroplastic.